The following is a 168-amino-acid chain: Protein OPG162 (168 aa).

The Intravirion portion of the chain corresponds to 1 to 14 (MKSLNRQTVSRFKK). The chain crosses the membrane as a helical span at residues 15 to 37 (LSVPAAIMMILSTIISGIGTFLH). Residues 38–168 (YKEELMPSAC…SVLCVKKFYK (131 aa)) lie on the Virion surface side of the membrane. The C-type lectin domain maps to 54-163 (YDKHCYLDTN…CKSTQSVLCV (110 aa)). 2 cysteine pairs are disulfide-bonded: Cys75–Cys162 and Cys141–Cys154. Asn133 is a glycosylation site (N-linked (GlcNAc...) asparagine; by host).

The protein belongs to the orthopoxvirus OPG162 protein family. As to quaternary structure, interacts with protein OPG161. Interacts with protein OPG164. Interacts with protein OPG190.

The protein localises to the virion membrane. It is found in the host Golgi apparatus. Functionally, forms a complex with OPG162 and OPG190 to coordinate the incorporation of OPG164 into wrapped enveloped virion (EV) membranes and, subsequently, the production of actin tails. Therefore plays an essential role in efficient cell-to-cell spread of viral particles. This is Protein OPG162 (OPG162) from Vaccinia virus (strain Western Reserve) (VACV).